A 466-amino-acid chain; its full sequence is GTP cyclohydrolase 1 (466 aa).

Residues C342, H345, and C416 each coordinate Zn(2+).

It belongs to the GTP cyclohydrolase I family. In terms of assembly, homodimer.

It carries out the reaction GTP + H2O = 7,8-dihydroneopterin 3'-triphosphate + formate + H(+). It participates in cofactor biosynthesis; 7,8-dihydroneopterin triphosphate biosynthesis; 7,8-dihydroneopterin triphosphate from GTP: step 1/1. Functionally, GTP cyclohydrolase 1 is the first enzyme in the biosynthetic pathway leading to folic acid. In Arabidopsis thaliana (Mouse-ear cress), this protein is GTP cyclohydrolase 1 (GCH1).